Reading from the N-terminus, the 345-residue chain is Erythronate-4-phosphate dehydrogenase (345 aa).

Serine 45 is a substrate binding site. NAD(+) is bound by residues aspartate 146 and threonine 174. Residue arginine 207 is part of the active site. Residue aspartate 227 participates in NAD(+) binding. The active site involves glutamate 232. The Proton donor role is filled by histidine 249. Glycine 252 lines the NAD(+) pocket.

It belongs to the D-isomer specific 2-hydroxyacid dehydrogenase family. PdxB subfamily. Homodimer.

The protein resides in the cytoplasm. The enzyme catalyses 4-phospho-D-erythronate + NAD(+) = (R)-3-hydroxy-2-oxo-4-phosphooxybutanoate + NADH + H(+). The protein operates within cofactor biosynthesis; pyridoxine 5'-phosphate biosynthesis; pyridoxine 5'-phosphate from D-erythrose 4-phosphate: step 2/5. In terms of biological role, catalyzes the oxidation of erythronate-4-phosphate to 3-hydroxy-2-oxo-4-phosphonooxybutanoate. The chain is Erythronate-4-phosphate dehydrogenase from Ruthia magnifica subsp. Calyptogena magnifica.